Here is a 1087-residue protein sequence, read N- to C-terminus: Platelet-derived growth factor receptor alpha (1087 aa).

The N-terminal stretch at 1–23 is a signal peptide; it reads MGTPPRTFLILGCFLTGPLLTLC. Residues 24 to 528 are Extracellular-facing; sequence QLPLPTIVPN…PTLRSELTVA (505 aa). Ig-like C2-type domains lie at 26-104, 116-208, 213-312, 314-411, and 414-517; these read PLPT…YNHT, IYIY…IYIL, QLPV…VHDK, FIHL…SLLI, and PALI…LKLV. N-linked (GlcNAc...) asparagine glycosylation is found at asparagine 44, asparagine 75, asparagine 88, and asparagine 102. Cysteine 49 and cysteine 99 are oxidised to a cystine. 2 cysteine pairs are disulfide-bonded: cysteine 149-cysteine 189 and cysteine 235-cysteine 290. Asparagine 353, asparagine 359, asparagine 458, and asparagine 468 each carry an N-linked (GlcNAc...) asparagine glycan. Cysteines 435 and 501 form a disulfide. Residues 529-549 form a helical membrane-spanning segment; that stretch reads AAVLVLLVIVIISLIVLVIIW. Over 550-1087 the chain is Cytoplasmic; the sequence is KQKPRYEIRW…SSDLVEDSFL (538 aa). Phosphotyrosine; by autocatalysis is present on residues tyrosine 572 and tyrosine 574. The Protein kinase domain occupies 593–954; the sequence is LVLGRILGSG…HLSEIVESLL (362 aa). Residues 599 to 607 and lysine 627 each bind ATP; that span reads LGSGAFGKV. Tyrosine 720, tyrosine 731, tyrosine 742, tyrosine 754, tyrosine 762, and tyrosine 768 each carry phosphotyrosine; by autocatalysis. The active-site Proton acceptor is aspartate 818. Residues tyrosine 849 and tyrosine 988 each carry the phosphotyrosine; by autocatalysis modification. Basic and acidic residues predominate over residues 1000–1011; it reads KDRESGFDEQRL. The segment at 1000–1059 is disordered; the sequence is KDRESGFDEQRLSADSGYITPLPDIDPVSEDELGKRNRHSSQTSEESAIETGSSSSTFIK. The residue at position 1017 (tyrosine 1017) is a Phosphotyrosine; by autocatalysis. Positions 1039–1057 are enriched in polar residues; the sequence is SSQTSEESAIETGSSSSTF.

This sequence belongs to the protein kinase superfamily. Tyr protein kinase family. CSF-1/PDGF receptor subfamily. As to quaternary structure, interacts with homodimeric PDGFA, PDGFB and PDGFC, and with heterodimers formed by PDGFA and PDGFB. Monomer in the absence of bound ligand. Interaction with dimeric PDGFA, PDGFB and/or PDGFC leads to receptor dimerization, where both PDGFRA homodimers and heterodimers with PDGFRB are observed. Post-translationally, ubiquitinated, leading to its internalization and degradation. In terms of processing, autophosphorylated on tyrosine residues upon ligand binding. Autophosphorylation occurs in trans, i.e. one subunit of the dimeric receptor phosphorylates tyrosine residues on the other subunit.

It is found in the cell membrane. The protein localises to the cell projection. Its subcellular location is the cilium. The protein resides in the golgi apparatus. The catalysed reaction is L-tyrosyl-[protein] + ATP = O-phospho-L-tyrosyl-[protein] + ADP + H(+). Present in an inactive conformation in the absence of bound ligand. Binding of PDGFA and/or PDGFB leads to dimerization and activation by autophosphorylation on tyrosine residues. In terms of biological role, tyrosine-protein kinase that acts as a cell-surface receptor for PDGFA, PDGFB and PDGFC and plays an essential role in the regulation of embryonic development, cell proliferation, survival and chemotaxis. Depending on the context, promotes or inhibits cell proliferation and cell migration. Plays an important role in the differentiation of bone marrow-derived mesenchymal stem cells. Required for normal skeleton development. Required for normal development of the gastrointestinal tract. Plays a role in cell migration and chemotaxis in wound healing. Plays a role in platelet activation, secretion of agonists from platelet granules, and in thrombin-induced platelet aggregation. Binding of its cognate ligands - homodimeric PDGFA, homodimeric PDGFB, heterodimers formed by PDGFA and PDGFB or homodimeric PDGFC -leads to the activation of several signaling cascades; the response depends on the nature of the bound ligand and is modulated by the formation of heterodimers between PDGFRA and PDGFRB. Phosphorylates PIK3R1, PLCG1, and PTPN11. Activation of PLCG1 leads to the production of the cellular signaling molecules diacylglycerol and inositol 1,4,5-trisphosphate, mobilization of cytosolic Ca(2+) and the activation of protein kinase C. Phosphorylates PIK3R1, the regulatory subunit of phosphatidylinositol 3-kinase, and thereby mediates activation of the AKT1 signaling pathway. Mediates activation of HRAS and of the MAP kinases MAPK1/ERK2 and/or MAPK3/ERK1. Promotes activation of STAT family members STAT1, STAT3 and STAT5A and/or STAT5B. Receptor signaling is down-regulated by protein phosphatases that dephosphorylate the receptor and its down-stream effectors, and by rapid internalization of the activated receptor. The chain is Platelet-derived growth factor receptor alpha (PDGFRA) from Gallus gallus (Chicken).